The primary structure comprises 215 residues: Oligoribonuclease (215 aa).

The Exonuclease domain maps to Leu-5–Leu-170. Residue Tyr-127 is part of the active site. The segment at Leu-196–Gly-215 is disordered. Residues Ala-202 to Gly-215 are compositionally biased toward low complexity.

It belongs to the oligoribonuclease family.

It is found in the cytoplasm. Its function is as follows. 3'-to-5' exoribonuclease specific for small oligoribonucleotides. The polypeptide is Oligoribonuclease (Mycolicibacterium paratuberculosis (strain ATCC BAA-968 / K-10) (Mycobacterium paratuberculosis)).